A 20-amino-acid chain; its full sequence is Thrombin-like enzyme okinaxobin-2 (20 aa).

Positions 1-20 (VVGGDECNINEHRFLVALYY) constitute a Peptidase S1 domain.

The protein belongs to the peptidase S1 family. Snake venom subfamily. Monomer. Post-translationally, glycosylated. As to expression, expressed by the venom gland.

The protein resides in the secreted. Strongly inactivated by diisopropylfluorophosphate (DFP) and to a lesser extent by tosyl-L-lysine chloromethyl ketone (TLCK). Its function is as follows. Thrombin-like snake venom serine protease. Releases both fibrinopeptides A and B from fibrinogen (FGA and FGB) to form fibrin clots. This chain is Thrombin-like enzyme okinaxobin-2, found in Ovophis okinavensis (Ryukyu Island pit viper).